A 323-amino-acid chain; its full sequence is C-type lectin domain family 11 member A (323 aa).

Positions 1-21 (MQAAWLLGALVVPQLLGFGHG) are cleaved as a signal peptide. 2 disordered regions span residues 55 to 106 (LGLP…TPED) and 272 to 295 (LGAQPSASPHPLSPDQPNGGTLEN). The Cell attachment site signature appears at 61-63 (RGD). Over residues 74–90 (EDWEMEEDQGEEEEEEA) the composition is skewed to acidic residues. One can recognise a C-type lectin domain in the interval 183–320 (LGHKCFLLSR…CQRRLYYVCE (138 aa)). Cystine bridges form between Cys-204–Cys-319 and Cys-296–Cys-311.

O-glycosylated. Probably sulfated on the O-glycans. As to expression, expressed in skeletal tissues including bone marrow, chondrocytes, primary ossification center-associated cells, the perichondrium and periosteum. Lower levels of expression were detected in spleen, thymus, appendix and fetal liver.

It localises to the cytoplasm. It is found in the secreted. In terms of biological role, promotes osteogenesis by stimulating the differentiation of mesenchymal progenitors into mature osteoblasts. Important for repair and maintenance of adult bone. This chain is C-type lectin domain family 11 member A (CLEC11A), found in Homo sapiens (Human).